The primary structure comprises 237 residues: Myelin protein zero-like protein 3 (237 aa).

Positions 1–32 are cleaved as a signal peptide; it reads MQLARGTVGGRGCALFPLLSILVVQGARIVLS. The Ig-like V-type domain maps to 33 to 149; that stretch reads LEISADAHVR…NIPLTELTVT (117 aa). Residues 33-159 lie on the Extracellular side of the membrane; it reads LEISADAHVR…ERGFGTMLSS (127 aa). A disulfide bond links Cys-53 and Cys-129. Asn-124 carries N-linked (GlcNAc...) asparagine glycosylation. The helical transmembrane segment at 160–180 threads the bilayer; it reads VALLSILVFVPSAVVVILLLV. The Cytoplasmic segment spans residues 181-237; it reads RMGRKATGVQKRSRSGYKKSSIEVSDDTDQEDSNDCMTRLCVRCAECLDSDYEEEAY.

Belongs to the myelin P0 protein family. Present in all tissues tested, including the skin. Present in the keratinocytes and sebocytes in the skin (at protein level).

The protein localises to the membrane. In terms of biological role, mediates homophilic cell-cell adhesion. This chain is Myelin protein zero-like protein 3 (Mpzl3), found in Mus musculus (Mouse).